Reading from the N-terminus, the 575-residue chain is Transport inhibitor response 1-like protein Os04g0395600 (575 aa).

In terms of domain architecture, F-box spans 1–45 (MTYFPEEVVEHIFSFLPAQRDRNTVSLVCKVWYEIERLSRRGVFV). Residue Lys-69 coordinates 1D-myo-inositol hexakisphosphate. The interaction with auxin-responsive proteins stretch occupies residues 76-77 (DF). 1D-myo-inositol hexakisphosphate contacts are provided by residues 108–109 (KR) and Arg-340. Residues 343 to 348 (PSDFYV) form an interaction with auxin-responsive proteins region. 396–398 (RFR) contacts 1D-myo-inositol hexakisphosphate. An interaction with auxin-responsive proteins region spans residues 400 to 404 (CILEP). Residue Arg-431 participates in 1D-myo-inositol hexakisphosphate binding. The interaction with auxin-responsive proteins stretch occupies residues 459 to 460 (AF). Residues 479–480 (RK) and Arg-504 each bind 1D-myo-inositol hexakisphosphate.

As to quaternary structure, part of a SCF (SKP1-cullin-F-box) protein ligase complex. May interact with auxin and auxin-responsive proteins.

The protein resides in the nucleus. Its pathway is protein modification; protein ubiquitination. The chain is Transport inhibitor response 1-like protein Os04g0395600 from Oryza sativa subsp. japonica (Rice).